Reading from the N-terminus, the 290-residue chain is Prepilin leader peptidase/N-methyltransferase (290 aa).

Residues 13–33 form a helical membrane-spanning segment; that stretch reads AFVLCTILLGLLVGSFLNVVV. The Zn(2+) site is built by Cys72, Cys75, Cys97, and Cys100. 5 consecutive transmembrane segments (helical) span residues 128-148, 158-178, 183-203, 228-248, and 261-276; these read FTWQ…MSLI, VLVL…LFAS, LFGA…FKLV, ILPL…VIML, and FGPY…LLWG.

This sequence belongs to the peptidase A24 family. Zn(2+) is required as a cofactor.

The protein resides in the cell inner membrane. It catalyses the reaction Typically cleaves a -Gly-|-Phe- bond to release an N-terminal, basic peptide of 5-8 residues from type IV prepilin, and then N-methylates the new N-terminal amino group, the methyl donor being S-adenosyl-L-methionine.. Plays an essential role in type IV pili and type II pseudopili formation by proteolytically removing the leader sequence from substrate proteins and subsequently monomethylating the alpha-amino group of the newly exposed N-terminal phenylalanine. Substrates include proteins required for pilus biogenesis PilE, PilV, PilW, and PilX as well as some components of the type II general secretory apparatus GspG, GspH, GspI and GspJ. The polypeptide is Prepilin leader peptidase/N-methyltransferase (pilD) (Pseudomonas aeruginosa (strain ATCC 15692 / DSM 22644 / CIP 104116 / JCM 14847 / LMG 12228 / 1C / PRS 101 / PAO1)).